The primary structure comprises 423 residues: Inactive autotransporter heptosyltransferase BimC (423 aa).

Positions 1 to 10 (MPKVTFSGSA) are enriched in polar residues. Residues 1-49 (MPKVTFSGSAPTLGVHAPPALDPRQPASPPPAASNGTHARGFSPPADMP) form a disordered region. Residues cysteine 371, cysteine 374, cysteine 390, and cysteine 402 each coordinate Fe(3+).

The protein belongs to the glycosyltransferase 9 family. As to quaternary structure, homotrimer or homotetramer. It depends on Fe(3+) as a cofactor.

The protein localises to the cell inner membrane. It is found in the cytoplasm. Functionally, iron-binding protein which is required for the asymmetric polar distribution of the autotransporter BimA on the bacterial surface prior to its translocation into bacterial periplasm. Lacks heptosyltransferase activity. This is Inactive autotransporter heptosyltransferase BimC from Burkholderia thailandensis (strain ATCC 700388 / DSM 13276 / CCUG 48851 / CIP 106301 / E264).